Consider the following 665-residue polypeptide: Prelamin-A/C (665 aa).

M1 is subject to N-acetylmethionine. Positions 1 to 25 are disordered; sequence METPSQRRATRSGAQASSTPLSPTR. Residues 1-33 are head; sequence METPSQRRATRSGAQASSTPLSPTRITRLQEKE. The interval 1-130 is interaction with MLIP; sequence METPSQRRAT…TKKEGDLLAA (130 aa). The residue at position 3 (T3) is a Phosphothreonine. Position 5 is a phosphoserine (S5). Residue T10 is modified to Phosphothreonine. S12 and S18 each carry phosphoserine. T19 carries the phosphothreonine modification. Residue S22 is modified to Phosphoserine. In terms of domain architecture, IF rod spans 31–387; it reads EKEDLQELND…KLLEGEEERL (357 aa). An N6-acetyllysine; alternate modification is found at K32. At K32 the chain carries N6-succinyllysine; alternate. Residue K32 forms a Glycyl lysine isopeptide (Lys-Gly) (interchain with G-Cter in SUMO2); alternate linkage. A coil 1A region spans residues 34-70; the sequence is DLQELNDRLAVYIDRVRSLETENAGLRLRITESEEVV. S51, S66, and S71 each carry phosphoserine. The linker 1 stretch occupies residues 71 to 80; the sequence is SREVSGIKAA. Residues K78 and K97 each carry the N6-acetyllysine modification. The segment at 81-218 is coil 1B; sequence YEAELGDARK…NIYSEELRET (138 aa). K97 participates in a covalent cross-link: Glycyl lysine isopeptide (Lys-Gly) (interchain with G-Cter in SUMO2). The residue at position 107 (S107) is a Phosphoserine. N6-acetyllysine occurs at positions 108, 114, 123, 135, 144, and 155. An N6-acetyllysine; alternate modification is found at K171. At K171 the chain carries N6-succinyllysine; alternate. K171 participates in a covalent cross-link: Glycyl lysine isopeptide (Lys-Gly) (interchain with G-Cter in SUMO2); alternate. N6-acetyllysine occurs at positions 180, 201, and 208. K201 participates in a covalent cross-link: Glycyl lysine isopeptide (Lys-Gly) (interchain with G-Cter in SUMO2); alternate. Residue K201 forms a Glycyl lysine isopeptide (Lys-Gly) (interchain with G-Cter in SUMO); alternate linkage. K208 participates in a covalent cross-link: Glycyl lysine isopeptide (Lys-Gly) (interchain with G-Cter in SUMO2). A Phosphoserine modification is found at S212. Glycyl lysine isopeptide (Lys-Gly) (interchain with G-Cter in SUMO2) cross-links involve residues K219 and K233. The interval 219–242 is linker 2; that stretch reads KRRHETRLVEIDNGKQREFESRLA. An N6-acetyllysine mark is found at K233, K260, K265, and K270. The tract at residues 243-383 is coil 2; the sequence is DALQELRAQH…HAYRKLLEGE (141 aa). K260 participates in a covalent cross-link: Glycyl lysine isopeptide (Lys-Gly) (interchain with G-Cter in SUMO2); alternate. K270 participates in a covalent cross-link: Glycyl lysine isopeptide (Lys-Gly) (interchain with G-Cter in SUMO2); alternate. A phosphoserine mark is found at S277, S282, S301, and S307. Residue K311 forms a Glycyl lysine isopeptide (Lys-Gly) (interchain with G-Cter in SUMO2); alternate linkage. 3 positions are modified to N6-acetyllysine: K311, K316, and K341. Glycyl lysine isopeptide (Lys-Gly) (interchain with G-Cter in SUMO2) cross-links involve residues K366 and K378. Residues 384-442 are disordered; sequence EERLRLSPSPTSQRSRGRASSHSSQSQGGGSVTKKRKLESSESRSSFSQHARTSGRVAV. The tract at residues 384-665 is tail; that stretch reads EERLRLSPSP…SQSSQNCSIM (282 aa). Phosphoserine is present on residues S390, S392, S395, S398, S403, S404, S406, S407, S409, and S414. S392 carries the post-translational modification Phosphoserine; by CDK1. The segment covering 395–409 has biased composition (low complexity); it reads SQRSRGRASSHSSQS. At T416 the chain carries Phosphothreonine. N6-acetyllysine occurs at positions 417 and 420. Glycyl lysine isopeptide (Lys-Gly) (interchain with G-Cter in SUMO2) cross-links involve residues K417 and K420. A Nuclear localization signal motif is present at residues 417–422; sequence KKRKLE. Phosphoserine is present on residues S423, S426, S429, and S431. Residues 428 to 545 form the LTD domain; that stretch reads SSFSQHARTS…EEVAMRKLVR (118 aa). A Glycyl lysine isopeptide (Lys-Gly) (interchain with G-Cter in SUMO2); alternate cross-link involves residue K450. Residues K450 and K457 each carry the N6-acetyllysine modification. Residues S458, E460, and S463 each carry the phosphoserine modification. N6-acetyllysine is present on K486. K486 is covalently cross-linked (Glycyl lysine isopeptide (Lys-Gly) (interchain with G-Cter in SUMO2)). T496 carries the post-translational modification Phosphothreonine. S500 bears the Phosphoserine mark. Phosphothreonine occurs at positions 505 and 510. Residues S533 and S546 each carry the phosphoserine modification. T548 bears the Phosphothreonine mark. The interval 553–577 is disordered; it reads NEDDDEDGEELLHHHRGSHCSGSGD. Phosphoserine occurs at positions 570, 572, and 573. A Glycyl lysine isopeptide (Lys-Gly) (interchain with G-Cter in SUMO2); alternate cross-link involves residue K599. K599 participates in a covalent cross-link: Glycyl lysine isopeptide (Lys-Gly) (interchain with G-Cter in SUMO1); alternate. S613, S614, S617, and S620 each carry phosphoserine. S626 and S629 each carry an O-linked (GlcNAc) serine glycan. 4 positions are modified to phosphoserine: S629, S633, S637, and S653. A propeptide spans 648 to 662 (removed in Lamin-A/C form); the sequence is LLGNSSPRSQSSQNC. Position 662 is a cysteine methyl ester (C662). A lipid anchor (S-farnesyl cysteine) is attached at C662. Residues 663–665 constitute a propeptide, removed in Prelamin-A/C form and in Lamin-A/C form; the sequence is SIM.

This sequence belongs to the intermediate filament family. As to quaternary structure, homodimer of lamin A and lamin C. Lamin dimers then assemble into dimeric head-to-tail polymers. Ultimately, two head-to-tail polymers assemble laterally into a protofilament with a uniformly shaped rod of 3.5 nm in diameter. Interacts with lamin-associated polypeptides IA, IB and TMPO-alpha, RB1 and with emerin. Proteolytically processed isoform A interacts with NARF. Interacts with SREBF1, SREBF2, SUN1, SUN2 and TMEM43. Interacts with TMEM201. Prelamin-A/C interacts with EMD. Interacts with DMPK; may regulate nuclear envelope stability. Interacts with MLIP. Interacts with SUV39H1; the interaction increases stability of SUV39H1. Interacts with ITSN1 isoform 2. Interacts with IFFO1; the interaction forms an interior nucleoskeleton and the recruitment to DNA double-strand breaks. Interacts with EMD. In terms of assembly, interacts (via C-terminus) with LEMD2 (via N-terminus) (in vitro). Post-translationally, proteolytic cleavage of the C-terminal of 18 residues of prelamin-A/C results in the production of lamin-A/C. The prelamin-A/C maturation pathway includes farnesylation of CAAX motif by protein farnesyltransferase (FNTA and FNTB), removal of the last three amino acids (-AAX) by RCE1/FACE2 and/or ZMPSTE24, methylation of the C-terminal cysteine by ICMT and endoproteolytic removal of the last 15 C-terminal amino acids by ZMPSTE24. Proteolytic cleavage requires prior farnesylation and methylation, and absence of these blocks cleavage. In terms of processing, farnesylation of prelamin-A/C facilitates nuclear envelope targeting. Phosphorylation plays a key role in lamin organization, subcellular localization and nuclear envelope disintegration. Phosphorylation by CDK1 at Ser-22 and Ser-392 at the onset of mitosis drives lamin disassembly and nuclear envelope breakdown. Phosphorylation at Ser-22 and Ser-392 during interphase promotes localization to the nucleoplasm and regulates lamina assembly. Phosphorylation at Ser-22, Ser-392 and Ser-629 during interphase causes redistribution between the nucleus and the cytoplasm. Phosphorylation at Ser-22 by CDK1 regulates matrix stiffness. Phosphorylation status of Ser-22 determines its localization between double-strand break (DSB) sites and the nuclear matrix. Phosphorylated by ATR at Ser-282 in response to DNA damage, leading to lamin disassembly and nuclear envelope rupture. Phosphorylation also regulates stability in micronuclei arising from genome instability: phosphorylation at Ser-395 by ATR in response to genome instability and double-stranded DNA breaks primes LMNA for subsequent phosphorylation at Ser-392 by CDK1 and micronuclei envelope rupture. The rupture of micronuclear envelope triggers the cGAS-STING pathway thereby activating the type I interferon response and innate immunity. Post-translationally, isoform C is phosphorylated on Ser-392, Ser-407 and Ser-409 at interphase. In terms of processing, acetylation by KAT8 is required for nuclear architecture. Sumoylation is necessary for the localization to the nuclear envelope. Post-translationally, the N-terminus is blocked. In terms of tissue distribution, expressed in liver and in bone marrow (at protein level). Expressed in cardiomyocytes. Specifically expressed in germ cells.

Its subcellular location is the nucleus lamina. The protein localises to the nucleus envelope. It is found in the nucleus. It localises to the nucleoplasm. The protein resides in the nucleus matrix. Its function is as follows. Lamins are intermediate filament proteins that assemble into a filamentous meshwork, and which constitute the major components of the nuclear lamina, a fibrous layer on the nucleoplasmic side of the inner nuclear membrane. Lamins provide a framework for the nuclear envelope, bridging the nuclear envelope and chromatin, thereby playing an important role in nuclear assembly, chromatin organization, nuclear membrane and telomere dynamics. Lamin A and C also regulate matrix stiffness by conferring nuclear mechanical properties. The structural integrity of the lamina is strictly controlled by the cell cycle, as seen by the disintegration and formation of the nuclear envelope in prophase and telophase, respectively. Lamin A and C are present in equal amounts in the lamina of mammals. Also invoved in DNA repair: recruited by DNA repair proteins XRCC4 and IFFO1 to the DNA double-strand breaks (DSBs) to prevent chromosome translocation by immobilizing broken DNA ends. Required for normal development of peripheral nervous system and skeletal muscle and for muscle satellite cell proliferation. Required for osteoblastogenesis and bone formation. Also prevents fat infiltration of muscle and bone marrow, helping to maintain the volume and strength of skeletal muscle and bone. Required for cardiac homeostasis. In terms of biological role, prelamin-A/C can accelerate smooth muscle cell senescence. It acts to disrupt mitosis and induce DNA damage in vascular smooth muscle cells (VSMCs), leading to mitotic failure, genomic instability, and premature senescence. Isoform C2 may have a role in determining the organization of nuclear and chromosomal structures during spermatogenesis. The sequence is that of Prelamin-A/C (Lmna) from Mus musculus (Mouse).